Here is a 265-residue protein sequence, read N- to C-terminus: tRNA (guanine-N(7)-)-methyltransferase (265 aa).

The segment at 1-40 is disordered; that stretch reads MIHDDDPNAPGAPHDDDATAAPASATRAAPAAGDDDDANP. Positions 19–32 are enriched in low complexity; sequence TAAPASATRAAPAA. The S-adenosyl-L-methionine site is built by glutamate 95, glutamate 120, aspartate 147, and aspartate 170. Residue aspartate 170 is part of the active site. Substrate contacts are provided by residues lysine 174, aspartate 206, and 241–244; that span reads TKFE.

Belongs to the class I-like SAM-binding methyltransferase superfamily. TrmB family.

It catalyses the reaction guanosine(46) in tRNA + S-adenosyl-L-methionine = N(7)-methylguanosine(46) in tRNA + S-adenosyl-L-homocysteine. It functions in the pathway tRNA modification; N(7)-methylguanine-tRNA biosynthesis. Catalyzes the formation of N(7)-methylguanine at position 46 (m7G46) in tRNA. This Burkholderia pseudomallei (strain 1710b) protein is tRNA (guanine-N(7)-)-methyltransferase.